The sequence spans 442 residues: Histidine--tRNA ligase (442 aa).

Belongs to the class-II aminoacyl-tRNA synthetase family. Homodimer.

It is found in the cytoplasm. It carries out the reaction tRNA(His) + L-histidine + ATP = L-histidyl-tRNA(His) + AMP + diphosphate + H(+). This Treponema pallidum (strain Nichols) protein is Histidine--tRNA ligase (hisS).